Reading from the N-terminus, the 207-residue chain is Anthranilate synthase component II (207 aa).

One can recognise a Glutamine amidotransferase type-1 domain in the interval 17 to 207; the sequence is RVLFVDNFDS…DVIRNFLAGL (191 aa). 66–68 is a binding site for L-glutamine; the sequence is GPG. Residue cysteine 96 is the Nucleophile; for GATase activity of the active site. 146-147 is a binding site for L-glutamine; it reads SL. Catalysis depends on residues histidine 187 and glutamate 189.

As to quaternary structure, tetramer of two components I and two components II.

The enzyme catalyses chorismate + L-glutamine = anthranilate + pyruvate + L-glutamate + H(+). The protein operates within amino-acid biosynthesis; L-tryptophan biosynthesis; L-tryptophan from chorismate: step 1/5. This is Anthranilate synthase component II (trpG1) from Haloarcula marismortui (strain ATCC 43049 / DSM 3752 / JCM 8966 / VKM B-1809) (Halobacterium marismortui).